Consider the following 263-residue polypeptide: 4-hydroxy-tetrahydrodipicolinate reductase (263 aa).

NAD(+) contacts are provided by residues 7–12 (GFKGRM), 96–98 (GTT), and 122–125 (APNF). Histidine 152 acts as the Proton donor/acceptor in catalysis. (S)-2,3,4,5-tetrahydrodipicolinate is bound at residue histidine 153. Lysine 156 (proton donor) is an active-site residue. Residue 162-163 (GT) participates in (S)-2,3,4,5-tetrahydrodipicolinate binding.

Belongs to the DapB family.

The protein localises to the cytoplasm. It carries out the reaction (S)-2,3,4,5-tetrahydrodipicolinate + NAD(+) + H2O = (2S,4S)-4-hydroxy-2,3,4,5-tetrahydrodipicolinate + NADH + H(+). The catalysed reaction is (S)-2,3,4,5-tetrahydrodipicolinate + NADP(+) + H2O = (2S,4S)-4-hydroxy-2,3,4,5-tetrahydrodipicolinate + NADPH + H(+). It participates in amino-acid biosynthesis; L-lysine biosynthesis via DAP pathway; (S)-tetrahydrodipicolinate from L-aspartate: step 4/4. Its function is as follows. Catalyzes the conversion of 4-hydroxy-tetrahydrodipicolinate (HTPA) to tetrahydrodipicolinate. In Listeria monocytogenes serotype 4b (strain CLIP80459), this protein is 4-hydroxy-tetrahydrodipicolinate reductase.